Reading from the N-terminus, the 443-residue chain is Inactive polypeptide N-acetylgalactosaminyltransferase-like protein 5 (443 aa).

Over 1 to 4 (MRNA) the chain is Cytoplasmic. The chain crosses the membrane as a helical; Signal-anchor for type II membrane protein span at residues 5–27 (IIRCLFYGSLTFGIWTALLFIYL). The Lumenal segment spans residues 28–443 (HHNHVSNWQK…PELEASVNRS (416 aa)). Residue asparagine 87 is glycosylated (N-linked (GlcNAc...) asparagine). 2 disulfides stabilise this stretch: cysteine 124–cysteine 355 and cysteine 346–cysteine 422. The catalytic subdomain A stretch occupies residues 133 to 243 (LPTASIVICF…RVWLEPLLHA (111 aa)). Substrate is bound by residues aspartate 174 and arginine 204. Position 227 (aspartate 227) interacts with Mn(2+). Residue serine 228 participates in substrate binding. Residue histidine 229 participates in Mn(2+) binding. Residues 301–363 (PIRSPAMSGG…PCSRVGHISK (63 aa)) are catalytic subdomain B. Position 332 (tryptophan 332) interacts with substrate. Residue histidine 360 coordinates Mn(2+).

This sequence belongs to the glycosyltransferase 2 family. GalNAc-T subfamily. Mn(2+) is required as a cofactor. Expressed in testis.

It localises to the late endosome membrane. Probable inactive glycosyltransferase required during spermatid development. May participate in protein loading into the acrosomes and accumulation of ubiquitin-proteasome systems around the head-tail coupling apparatus region. This chain is Inactive polypeptide N-acetylgalactosaminyltransferase-like protein 5 (GALNTL5), found in Macaca fascicularis (Crab-eating macaque).